Here is a 353-residue protein sequence, read N- to C-terminus: RNA 3'-terminal phosphate cyclase (353 aa).

Residues glutamine 100 and histidine 289 to aspartate 292 each bind ATP. Histidine 315 (tele-AMP-histidine intermediate) is an active-site residue.

The protein belongs to the RNA 3'-terminal cyclase family. Type 1 subfamily.

The protein localises to the cytoplasm. It carries out the reaction a 3'-end 3'-phospho-ribonucleotide-RNA + ATP = a 3'-end 2',3'-cyclophospho-ribonucleotide-RNA + AMP + diphosphate. Catalyzes the conversion of 3'-phosphate to a 2',3'-cyclic phosphodiester at the end of RNA. The mechanism of action of the enzyme occurs in 3 steps: (A) adenylation of the enzyme by ATP; (B) transfer of adenylate to an RNA-N3'P to produce RNA-N3'PP5'A; (C) and attack of the adjacent 2'-hydroxyl on the 3'-phosphorus in the diester linkage to produce the cyclic end product. The biological role of this enzyme is unknown but it is likely to function in some aspects of cellular RNA processing. This Ignicoccus hospitalis (strain KIN4/I / DSM 18386 / JCM 14125) protein is RNA 3'-terminal phosphate cyclase.